The following is a 705-amino-acid chain: Translation initiation factor IF-2 (705 aa).

The segment at 40 to 124 (DDQIKALDKK…QPAAPKEIPS (85 aa)) is disordered. Positions 41–58 (DQIKALDKKFKKEQKNDN) are enriched in basic and acidic residues. Low complexity predominate over residues 59–77 (KQSTQNNHQKSNNQNQNKG). Residues 94-108 (KGNKKNNRNNKKNNK) are compositionally biased toward basic residues. In terms of domain architecture, tr-type G spans 207 to 376 (ERPAVVTIMG…GLVAEVQELK (170 aa)). The tract at residues 216–223 (GHVDHGKT) is G1. Residue 216–223 (GHVDHGKT) coordinates GTP. The tract at residues 241-245 (GITQH) is G2. Residues 262-265 (DTPG) form a G3 region. GTP contacts are provided by residues 262 to 266 (DTPGH) and 316 to 319 (NKID). Positions 316–319 (NKID) are G4. The G5 stretch occupies residues 352 to 354 (SAL).

The protein belongs to the TRAFAC class translation factor GTPase superfamily. Classic translation factor GTPase family. IF-2 subfamily.

It localises to the cytoplasm. One of the essential components for the initiation of protein synthesis. Protects formylmethionyl-tRNA from spontaneous hydrolysis and promotes its binding to the 30S ribosomal subunits. Also involved in the hydrolysis of GTP during the formation of the 70S ribosomal complex. This is Translation initiation factor IF-2 from Staphylococcus aureus (strain MRSA252).